The following is a 179-amino-acid chain: Large ribosomal subunit protein uL5 (179 aa).

The protein belongs to the universal ribosomal protein uL5 family. Part of the 50S ribosomal subunit; part of the 5S rRNA/L5/L18/L25 subcomplex. Contacts the 5S rRNA and the P site tRNA. Forms a bridge to the 30S subunit in the 70S ribosome.

Its function is as follows. This is one of the proteins that bind and probably mediate the attachment of the 5S RNA into the large ribosomal subunit, where it forms part of the central protuberance. In the 70S ribosome it contacts protein S13 of the 30S subunit (bridge B1b), connecting the 2 subunits; this bridge is implicated in subunit movement. Contacts the P site tRNA; the 5S rRNA and some of its associated proteins might help stabilize positioning of ribosome-bound tRNAs. The sequence is that of Large ribosomal subunit protein uL5 from Buchnera aphidicola subsp. Schizaphis graminum (strain Sg).